A 1669-amino-acid chain; its full sequence is Collagen alpha-1(IV) chain (1669 aa).

Residues 1–27 (MGPRLSVWLLLLPAALLLHEEHSRAAA) form the signal peptide. A propeptide spans 28 to 172 (KGGCAGSGCG…LGHVPGMLLK (145 aa)) (N-terminal propeptide (7S domain)). Disordered regions lie at residues 48–459 (KGER…EIGE), 504–1382 (GRDG…PKGQ), and 1404–1431 (PGQK…DGLP). N126 carries N-linked (GlcNAc...) asparagine glycosylation. Positions 173–1440 (GERGFPGIPG…PGSMGPPGTP (1268 aa)) are triple-helical region. Pro residues predominate over residues 196–214 (VGPPGFTGPPGPPGPPGPP). Residues P204, P207, and P210 each carry the 3-hydroxyproline modification. Low complexity predominate over residues 234-249 (QGVSGPPGVPGQAQVQ). Composition is skewed to basic and acidic residues over residues 250 to 263 (EKGD…KGQK) and 289 to 298 (PGKDGDKGEK). Composition is skewed to pro residues over residues 367-376 (PGQPGPPGLP), 413-424 (PGPPGSPGPPGQ), and 436-448 (PGPP…PGIP). Over residues 535–545 (FDLRLKGDKGD) the composition is skewed to basic and acidic residues. Residues 586 to 595 (GPPGGVGFPG) are compositionally biased toward gly residues. P587 and P602 each carry 3-hydroxyproline. P603 carries the 4-hydroxyproline modification. P605 is subject to 3-hydroxyproline. 4-hydroxyproline is present on P606. Over residues 611–620 (AGPIGDKGQA) the composition is skewed to low complexity. The span at 621-630 (GFPGGPGSPG) shows a compositional bias: gly residues. 4 positions are modified to 4-hydroxyproline: P623, P626, P629, and P632. At P647 the chain carries 3-hydroxyproline. The segment covering 797–817 (GVPGIGPPGARGPPGGQGPPG) has biased composition (gly residues). 2 stretches are compositionally biased toward low complexity: residues 856-875 (QSGL…PGFP) and 977-986 (PGKDGQAGQP). Residues 1011-1020 (GSVGGMGLPG) are compositionally biased toward gly residues. Positions 1086–1114 (SIGIPGMPGSPGLKGSPGSVGYPGSPGLP) are enriched in low complexity. P1214 is subject to 3-hydroxyproline. A compositionally biased stretch (pro residues) spans 1247–1258 (PGLPGPMGPPGL). A compositionally biased stretch (gly residues) spans 1290–1299 (GMPGIGGSPG). The segment covering 1368–1382 (PGLKGLQGLPGPKGQ) has biased composition (low complexity). P1424 carries the post-translational modification 3-hydroxyproline. Positions 1445–1669 (GFLVTRHSQT…SRCQVCMRRT (225 aa)) constitute a Collagen IV NC1 domain. 6 disulfide bridges follow: C1460–C1551, C1493–C1548, C1505–C1511, C1570–C1665, C1604–C1662, and C1616–C1622. M1533 participates in a covalent cross-link: S-Lysyl-methionine sulfilimine (Met-Lys) (interchain with K-1651). Residue K1651 forms an S-Lysyl-methionine sulfilimine (Lys-Met) (interchain with M-1533) linkage.

It belongs to the type IV collagen family. There are six type IV collagen isoforms, alpha 1(IV)-alpha 6(IV), each of which can form a triple helix structure with 2 other chains to generate type IV collagen network. Interacts with EFEMP2. Lysines at the third position of the tripeptide repeating unit (G-X-Y) are hydroxylated. The modified lysines can be O-glycosylated. In terms of processing, contains 4-hydroxyproline. Prolines at the third position of the tripeptide repeating unit (G-X-Y) are hydroxylated in some or all of the chains. Post-translationally, contains 3-hydroxyproline. This modification occurs on the first proline residue in the sequence motif Gly-Pro-Hyp, where Hyp is 4-hydroxyproline. Type IV collagens contain numerous cysteine residues which are involved in inter- and intramolecular disulfide bonding. 12 of these, located in the NC1 domain, are conserved in all known type IV collagens. In terms of processing, the trimeric structure of the NC1 domains is stabilized by covalent bonds (sulfilimine cross-links) between Lys and Met residues. These cross-links are important for the mechanical stability of the basement membrane. Sulfilimine cross-link is catalyzed by PXDN. Post-translationally, proteolytic processing produces the C-terminal NC1 peptide, arresten. As to expression, highly expressed in placenta.

The protein resides in the secreted. The protein localises to the extracellular space. It is found in the extracellular matrix. It localises to the basement membrane. In terms of biological role, type IV collagen is the major structural component of glomerular basement membranes (GBM), forming a 'chicken-wire' meshwork together with laminins, proteoglycans and entactin/nidogen. Functionally, arresten, comprising the C-terminal NC1 domain, inhibits angiogenesis and tumor formation. The C-terminal half is found to possess the anti-angiogenic activity. Specifically inhibits endothelial cell proliferation, migration and tube formation. The chain is Collagen alpha-1(IV) chain from Homo sapiens (Human).